The following is a 356-amino-acid chain: V-type proton ATPase subunit d (356 aa).

The protein belongs to the V-ATPase V0D/AC39 subunit family. In terms of assembly, V-ATPase is a heteromultimeric enzyme composed of a peripheral catalytic V1 complex (components A to H) attached to an integral membrane V0 proton pore complex (components: a, c, c', c'' and d).

Its function is as follows. Subunit of the integral membrane V0 complex of vacuolar ATPase. Vacuolar ATPase is responsible for acidifying a variety of intracellular compartments in eukaryotic cells, thus providing most of the energy required for transport processes in the vacuolar system. In Dictyostelium discoideum (Social amoeba), this protein is V-type proton ATPase subunit d (vatD-1).